The sequence spans 374 residues: Serine/threonine-protein kinase-transforming protein mos (374 aa).

The Protein kinase domain occupies 94-370; sequence VCLMHRLGSG…LLQRDLKAFR (277 aa). Residues 100–108 and K121 each bind ATP; that span reads LGSGGFGSV. D229 (proton acceptor) is an active-site residue.

It belongs to the protein kinase superfamily. Ser/Thr protein kinase family.

It carries out the reaction L-seryl-[protein] + ATP = O-phospho-L-seryl-[protein] + ADP + H(+). It catalyses the reaction L-threonyl-[protein] + ATP = O-phospho-L-threonyl-[protein] + ADP + H(+). The chain is Serine/threonine-protein kinase-transforming protein mos (V-MOS) from Mus musculus (Mouse).